The sequence spans 388 residues: Succinate--CoA ligase [ADP-forming] subunit beta (388 aa).

One can recognise an ATP-grasp domain in the interval 9-244 (KSLFAEYGLP…PSQDDAREAH (236 aa)). ATP-binding positions include Lys-46, 53–55 (GRG), Glu-99, Thr-102, and Glu-107. 2 residues coordinate Mg(2+): Asn-199 and Asp-213. Residues Asn-264 and 321–323 (GIV) contribute to the substrate site.

It belongs to the succinate/malate CoA ligase beta subunit family. In terms of assembly, heterotetramer of two alpha and two beta subunits. The cofactor is Mg(2+).

It catalyses the reaction succinate + ATP + CoA = succinyl-CoA + ADP + phosphate. It carries out the reaction GTP + succinate + CoA = succinyl-CoA + GDP + phosphate. It participates in carbohydrate metabolism; tricarboxylic acid cycle; succinate from succinyl-CoA (ligase route): step 1/1. Succinyl-CoA synthetase functions in the citric acid cycle (TCA), coupling the hydrolysis of succinyl-CoA to the synthesis of either ATP or GTP and thus represents the only step of substrate-level phosphorylation in the TCA. The beta subunit provides nucleotide specificity of the enzyme and binds the substrate succinate, while the binding sites for coenzyme A and phosphate are found in the alpha subunit. This Shewanella putrefaciens (strain CN-32 / ATCC BAA-453) protein is Succinate--CoA ligase [ADP-forming] subunit beta.